The primary structure comprises 103 residues: Small ribosomal subunit protein uS10 (103 aa).

Belongs to the universal ribosomal protein uS10 family. In terms of assembly, part of the 30S ribosomal subunit.

In terms of biological role, involved in the binding of tRNA to the ribosomes. The protein is Small ribosomal subunit protein uS10 of Pseudomonas aeruginosa (strain LESB58).